The chain runs to 365 residues: DNA replication and repair protein RecF (365 aa).

Gly30–Thr37 lines the ATP pocket.

The protein belongs to the RecF family.

The protein localises to the cytoplasm. In terms of biological role, the RecF protein is involved in DNA metabolism; it is required for DNA replication and normal SOS inducibility. RecF binds preferentially to single-stranded, linear DNA. It also seems to bind ATP. The polypeptide is DNA replication and repair protein RecF (Alkaliphilus oremlandii (strain OhILAs) (Clostridium oremlandii (strain OhILAs))).